The sequence spans 638 residues: Stress-activated protein kinase alpha (638 aa).

6 ANK repeats span residues 43-72 (YGQS…TLKA), 80-109 (NGFS…NVDV), 113-146 (DLNT…NVNA), 150-181 (NGET…NVNL), 185-214 (FQES…DVDC), and 219-248 (ERKT…LFDW). The SAM domain maps to 240-303 (KKYKDLFDWL…LKETSNLANE (64 aa)). One can recognise a Protein kinase domain in the interval 351–620 (LEYTEKLGAG…RLVTIENEYR (270 aa)). ATP is bound by residues 357-365 (LGAGSSGKV) and Lys378. Asp472 serves as the catalytic Proton acceptor.

This sequence belongs to the protein kinase superfamily. TKL Ser/Thr protein kinase family. In terms of assembly, interacts with F-actin. Post-translationally, autophosphorylated.

The protein resides in the cytoplasm. The protein localises to the cytoskeleton. It carries out the reaction L-seryl-[protein] + ATP = O-phospho-L-seryl-[protein] + ADP + H(+). The catalysed reaction is L-threonyl-[protein] + ATP = O-phospho-L-threonyl-[protein] + ADP + H(+). Functionally, may be involved in cortical F-actin organization and resistance to osmotic stress. Activated upon cell detachment, in vitro. This Dictyostelium discoideum (Social amoeba) protein is Stress-activated protein kinase alpha (spkA-1).